A 332-amino-acid chain; its full sequence is NAD-dependent protein deacetylase hst2 (332 aa).

Positions 7–269 constitute a Deacetylase sirtuin-type domain; the sequence is KHVDSSKHLE…RALCKLLGWS (263 aa). NAD(+) is bound by residues 35–55 and 118–121; these read GAGISTAAGIPDFRSPETGIY and QNID. His138 functions as the Proton acceptor in the catalytic mechanism. Zn(2+) contacts are provided by Cys146, Cys149, Cys170, and Cys173. NAD(+)-binding positions include 210–212, 235–237, and Cys255; these read GTS and NRE.

The protein belongs to the sirtuin family. Class I subfamily. Requires Zn(2+) as cofactor.

It localises to the cytoplasm. The protein localises to the nucleus. It carries out the reaction N(6)-acetyl-L-lysyl-[protein] + NAD(+) + H2O = 2''-O-acetyl-ADP-D-ribose + nicotinamide + L-lysyl-[protein]. Functionally, NAD-dependent histone deacetylase, which could function in telomeric silencing, cell cycle progression and chromosome stability. In Schizosaccharomyces pombe (strain 972 / ATCC 24843) (Fission yeast), this protein is NAD-dependent protein deacetylase hst2 (hst2).